The primary structure comprises 364 residues: Succinyl-diaminopimelate desuccinylase (364 aa).

Residue histidine 66 participates in Zn(2+) binding. Residue aspartate 68 is part of the active site. A Zn(2+)-binding site is contributed by aspartate 97. Glutamate 127 serves as the catalytic Proton acceptor. Residues glutamate 128, glutamate 156, and histidine 341 each coordinate Zn(2+).

This sequence belongs to the peptidase M20A family. DapE subfamily. Homodimer. The cofactor is Zn(2+). It depends on Co(2+) as a cofactor.

The enzyme catalyses N-succinyl-(2S,6S)-2,6-diaminopimelate + H2O = (2S,6S)-2,6-diaminopimelate + succinate. The protein operates within amino-acid biosynthesis; L-lysine biosynthesis via DAP pathway; LL-2,6-diaminopimelate from (S)-tetrahydrodipicolinate (succinylase route): step 3/3. Functionally, catalyzes the hydrolysis of N-succinyl-L,L-diaminopimelic acid (SDAP), forming succinate and LL-2,6-diaminopimelate (DAP), an intermediate involved in the bacterial biosynthesis of lysine and meso-diaminopimelic acid, an essential component of bacterial cell walls. The polypeptide is Succinyl-diaminopimelate desuccinylase (Wolinella succinogenes (strain ATCC 29543 / DSM 1740 / CCUG 13145 / JCM 31913 / LMG 7466 / NCTC 11488 / FDC 602W) (Vibrio succinogenes)).